The chain runs to 354 residues: Photosystem II protein D1 2 (354 aa).

3 helical membrane passes run 29-46, 118-133, and 142-156; these read YIGW…TATT, HFLI…EWEL, and WIAV…AATA. His118 contacts chlorophyll a. Residue Tyr126 participates in pheophytin a binding. [CaMn4O5] cluster is bound by residues Asp170 and Glu189. Residues 197–218 form a helical membrane-spanning segment; it reads FHQLGVAGVFGGALFSAMHGSL. His198 is a chlorophyll a binding site. Residues His215 and 264 to 265 each bind a quinone; that span reads SF. His215 contributes to the Fe cation binding site. Residue His272 participates in Fe cation binding. Residues 274–288 form a helical membrane-spanning segment; sequence FLAAWPVIGIWFTAL. [CaMn4O5] cluster is bound by residues His332, Glu333, Asp342, and Ala344. The propeptide occupies 345 to 354; the sequence is AVEVAPAVRG.

This sequence belongs to the reaction center PufL/M/PsbA/D family. In terms of assembly, PSII is composed of 1 copy each of membrane proteins PsbA, PsbB, PsbC, PsbD, PsbE, PsbF, PsbH, PsbI, PsbJ, PsbK, PsbL, PsbM, PsbT, PsbX, PsbY, PsbZ, Psb30/Ycf12, peripheral proteins PsbO, CyanoQ (PsbQ), PsbU, PsbV and a large number of cofactors. It forms dimeric complexes. The D1/D2 heterodimer binds P680, chlorophylls that are the primary electron donor of PSII, and subsequent electron acceptors. It shares a non-heme iron and each subunit binds pheophytin, quinone, additional chlorophylls, carotenoids and lipids. D1 provides most of the ligands for the Mn4-Ca-O5 cluster of the oxygen-evolving complex (OEC). There is also a Cl(-1) ion associated with D1 and D2, which is required for oxygen evolution. The PSII complex binds additional chlorophylls, carotenoids and specific lipids. is required as a cofactor. In terms of processing, tyr-161 forms a radical intermediate that is referred to as redox-active TyrZ, YZ or Y-Z. Post-translationally, C-terminally processed by CtpA; processing is essential to allow assembly of the oxygen-evolving complex and thus photosynthetic growth.

Its subcellular location is the cellular thylakoid membrane. The enzyme catalyses 2 a plastoquinone + 4 hnu + 2 H2O = 2 a plastoquinol + O2. Its function is as follows. Photosystem II (PSII) is a light-driven water:plastoquinone oxidoreductase that uses light energy to abstract electrons from H(2)O, generating O(2) and a proton gradient subsequently used for ATP formation. It consists of a core antenna complex that captures photons, and an electron transfer chain that converts photonic excitation into a charge separation. The D1/D2 (PsbA/PsbD) reaction center heterodimer binds P680, the primary electron donor of PSII as well as several subsequent electron acceptors. The sequence is that of Photosystem II protein D1 2 from Synechococcus sp. (strain JA-2-3B'a(2-13)) (Cyanobacteria bacterium Yellowstone B-Prime).